Reading from the N-terminus, the 322-residue chain is Protease HtpX homolog (322 aa).

The next 2 membrane-spanning stretches (helical) occupy residues 19–39 and 61–81; these read ILLI…CYLL and FINL…IAYF. H165 provides a ligand contact to Zn(2+). E166 is a catalytic residue. Residue H169 participates in Zn(2+) binding. The next 2 membrane-spanning stretches (helical) occupy residues 175 to 195 and 216 to 236; these read VRLL…AQIA and ILIL…ATLM. E245 contacts Zn(2+).

The protein belongs to the peptidase M48B family. Zn(2+) is required as a cofactor.

It is found in the cell inner membrane. In Bacteroides fragilis (strain ATCC 25285 / DSM 2151 / CCUG 4856 / JCM 11019 / LMG 10263 / NCTC 9343 / Onslow / VPI 2553 / EN-2), this protein is Protease HtpX homolog.